A 774-amino-acid polypeptide reads, in one-letter code: 5-methyltetrahydropteroyltriglutamate--homocysteine methyltransferase (774 aa).

Residues 23–26 (RELK) and K123 contribute to the 5-methyltetrahydropteroyltri-L-glutamate site. L-homocysteine is bound by residues 446–448 (IGS) and E499. Residues 446–448 (IGS) and E499 contribute to the L-methionine site. 5-methyltetrahydropteroyltri-L-glutamate is bound by residues 530–531 (RC) and W576. An L-homocysteine-binding site is contributed by D614. D614 contacts L-methionine. E620 contacts 5-methyltetrahydropteroyltri-L-glutamate. Residues H656, C658, and E680 each contribute to the Zn(2+) site. H709 serves as the catalytic Proton donor. C741 contributes to the Zn(2+) binding site.

Belongs to the vitamin-B12 independent methionine synthase family. Requires Zn(2+) as cofactor.

It catalyses the reaction 5-methyltetrahydropteroyltri-L-glutamate + L-homocysteine = tetrahydropteroyltri-L-glutamate + L-methionine. It functions in the pathway amino-acid biosynthesis; L-methionine biosynthesis via de novo pathway; L-methionine from L-homocysteine (MetE route): step 1/1. In terms of biological role, catalyzes the transfer of a methyl group from 5-methyltetrahydrofolate to homocysteine resulting in methionine formation. The sequence is that of 5-methyltetrahydropteroyltriglutamate--homocysteine methyltransferase from Aliivibrio fischeri (strain MJ11) (Vibrio fischeri).